A 301-amino-acid chain; its full sequence is Homoserine kinase (301 aa).

Position 86–96 (86–96) interacts with ATP; it reads PLARGLGSSAT.

This sequence belongs to the GHMP kinase family. Homoserine kinase subfamily.

The protein localises to the cytoplasm. The catalysed reaction is L-homoserine + ATP = O-phospho-L-homoserine + ADP + H(+). It participates in amino-acid biosynthesis; L-threonine biosynthesis; L-threonine from L-aspartate: step 4/5. Functionally, catalyzes the ATP-dependent phosphorylation of L-homoserine to L-homoserine phosphate. In Thermosynechococcus vestitus (strain NIES-2133 / IAM M-273 / BP-1), this protein is Homoserine kinase.